The following is a 403-amino-acid chain: Peroxisomal membrane protein PEX13 (403 aa).

Positions 1–11 (MASQPPPPPKP) are enriched in pro residues. Positions 1 to 69 (MASQPPPPPK…SQQTGSGNLN (69 aa)) are disordered. Residues 1–134 (MASQPPPPPK…SSRGAFQSIE (134 aa)) are Peroxisomal matrix-facing. Positions 59–69 (PSQQTGSGNLN) are enriched in polar residues. The helical transmembrane segment at 135–155 (SIVHAFASVSMMMDATFSAVY) threads the bilayer. The segment at 145–233 (MMMDATFSAV…EDRAANSAKS (89 aa)) is targeting to peroxisomes. Topologically, residues 156–174 (NSFRAVLDVANHFSRLKIH) are cytoplasmic. A helical transmembrane segment spans residues 175–192 (FTKVFSAFALVRTIRYLY). An interaction with PEX19 region spans residues 175-196 (FTKVFSAFALVRTIRYLYRRLQ). The Peroxisomal matrix segment spans residues 193–233 (RRLQWMIGLRRGLENEDLWAESEGTVACLGAEDRAANSAKS). Residues 234 to 254 (WPIFLFFAVILGGPYLIWKLL) form a helical membrane-spanning segment. The Cytoplasmic segment spans residues 255–403 (STHSDEVTDS…TGKNGDKQDL (149 aa)). Residues 272-336 (DDHVVARAEY…PANYVKILGK (65 aa)) enclose the SH3 domain. Position 354 is a phosphoserine (Ser-354).

The protein belongs to the peroxin-13 family. In terms of assembly, interacts (via SH3 domain) with PEX14 (via SH3-binding motif); forming the PEX13-PEX14 docking complex. Interacts with PEX19.

It localises to the peroxisome membrane. Its function is as follows. Component of the PEX13-PEX14 docking complex, a translocon channel that specifically mediates the import of peroxisomal cargo proteins bound to PEX5 receptor. The PEX13-PEX14 docking complex forms a large import pore which can be opened to a diameter of about 9 nm. Mechanistically, PEX5 receptor along with cargo proteins associates with the PEX14 subunit of the PEX13-PEX14 docking complex in the cytosol, leading to the insertion of the receptor into the organelle membrane with the concomitant translocation of the cargo into the peroxisome matrix. Involved in the import of PTS1- and PTS2-type containing proteins. This Bos taurus (Bovine) protein is Peroxisomal membrane protein PEX13 (PEX13).